A 216-amino-acid polypeptide reads, in one-letter code: Imidazole glycerol phosphate synthase subunit HisH (216 aa).

The Glutamine amidotransferase type-1 domain maps to 5-213 (RLAVIDYDAG…VEFVARRLPA (209 aa)). Cys83 serves as the catalytic Nucleophile. Active-site residues include His188 and Glu190.

In terms of assembly, heterodimer of HisH and HisF.

Its subcellular location is the cytoplasm. The catalysed reaction is 5-[(5-phospho-1-deoxy-D-ribulos-1-ylimino)methylamino]-1-(5-phospho-beta-D-ribosyl)imidazole-4-carboxamide + L-glutamine = D-erythro-1-(imidazol-4-yl)glycerol 3-phosphate + 5-amino-1-(5-phospho-beta-D-ribosyl)imidazole-4-carboxamide + L-glutamate + H(+). The enzyme catalyses L-glutamine + H2O = L-glutamate + NH4(+). The protein operates within amino-acid biosynthesis; L-histidine biosynthesis; L-histidine from 5-phospho-alpha-D-ribose 1-diphosphate: step 5/9. Functionally, IGPS catalyzes the conversion of PRFAR and glutamine to IGP, AICAR and glutamate. The HisH subunit catalyzes the hydrolysis of glutamine to glutamate and ammonia as part of the synthesis of IGP and AICAR. The resulting ammonia molecule is channeled to the active site of HisF. The protein is Imidazole glycerol phosphate synthase subunit HisH of Synechococcus sp. (strain JA-3-3Ab) (Cyanobacteria bacterium Yellowstone A-Prime).